A 459-amino-acid chain; its full sequence is Sulfide:quinone oxidoreductase, mitochondrial (459 aa).

The N-terminal 24 residues, 1–24 (MLTLNSTIKSVTGSFQSASMLARF), are a transit peptide targeting the mitochondrion. Residue 35-39 (GGGSA) coordinates FAD. Active-site cysteine persulfide intermediate residues include C204 and C383.

The protein belongs to the SQRD family. Requires FAD as cofactor.

It localises to the mitochondrion. Its function is as follows. Catalyzes the oxidation of hydrogen sulfide, with the help of a quinone. This chain is Sulfide:quinone oxidoreductase, mitochondrial (hmt2), found in Schizosaccharomyces pombe (strain 972 / ATCC 24843) (Fission yeast).